We begin with the raw amino-acid sequence, 354 residues long: Gibberellin receptor GID1 (354 aa).

Residues 120–122 (HGG) carry the Involved in the stabilization of the negatively charged intermediate by the formation of the oxyanion hole motif. Gibberellin A3 is bound by residues 122–123 (GS), Tyr134, Ser198, and Asp250. Residues 122 to 123 (GS), Tyr134, and Ser198 contribute to the gibberellin A4 site. Ser198 is a catalytic residue. Asp296 is an active-site residue. Gly327 contributes to the gibberellin A3 binding site. Residue Gly327 participates in gibberellin A4 binding.

The protein belongs to the 'GDXG' lipolytic enzyme family. As to quaternary structure, interacts with the DELLA protein SLR1 in a GA-dependent manner, resulting in subsequent SLR1 degradation.

It localises to the nucleus. In terms of biological role, functions as a soluble gibberellin (GA) receptor. GA is an essential hormone that regulates growth and development in plants. Binds with high affinity the biologically active GAs such as GA1, GA3 and GA4, but has low or no affinity for the biologically inactive GAs. Upon GA-binding, it interacts with the DELLA protein SLR1, a repressor of GA signaling. This leads to SLR1 degradation by the proteasome, allowing the GA signaling pathway. The protein is Gibberellin receptor GID1 of Oryza sativa subsp. japonica (Rice).